Consider the following 327-residue polypeptide: MTRRPPRFWLRPTRSIAARLLRPFSFIATTLTRRRLRQPTFHASVPVLCCGNITTGGTGKTPLTLDLVQRLRDRGHHPHILSRGHGGRERGPIGVNPNRSTPRDVGDEPLLLAQSAPTWIGADRAETARLAISQGADCLVMDDGFQNPTLHQDVSVLVVDGVTGFGNGCVLPAGPLREPVPDALARAQAVVVMGDDRHNLIPTFPPHLLTAQARLVPGPEIRTLQGRRIVAFAGIGRPEKFFDMLRDAGVAPIRSLPFPDHHFYTPRDIQRLEALSRESGTTLVTTAKDAVKLPFPFRTQVKVIGVELLWADPKSPERLLDLLFSAS.

Residue 54–61 participates in ATP binding; the sequence is TTGGTGKT. The interval 78–106 is disordered; sequence PHILSRGHGGRERGPIGVNPNRSTPRDVG.

This sequence belongs to the LpxK family.

The enzyme catalyses a lipid A disaccharide + ATP = a lipid IVA + ADP + H(+). The protein operates within glycolipid biosynthesis; lipid IV(A) biosynthesis; lipid IV(A) from (3R)-3-hydroxytetradecanoyl-[acyl-carrier-protein] and UDP-N-acetyl-alpha-D-glucosamine: step 6/6. Transfers the gamma-phosphate of ATP to the 4'-position of a tetraacyldisaccharide 1-phosphate intermediate (termed DS-1-P) to form tetraacyldisaccharide 1,4'-bis-phosphate (lipid IVA). In Gluconobacter oxydans (strain 621H) (Gluconobacter suboxydans), this protein is Tetraacyldisaccharide 4'-kinase.